The primary structure comprises 226 residues: Large ribosomal subunit protein uL1 (226 aa).

The protein belongs to the universal ribosomal protein uL1 family. Part of the 50S ribosomal subunit.

Binds directly to 23S rRNA. Probably involved in E site tRNA release. Functionally, protein L1 is also a translational repressor protein, it controls the translation of its operon by binding to its mRNA. The sequence is that of Large ribosomal subunit protein uL1 from Korarchaeum cryptofilum (strain OPF8).